Consider the following 314-residue polypeptide: SERTA domain-containing protein 2 (314 aa).

The SERTA domain maps to 33–80; that stretch reads YTLQRQTIFNISLMKLYNHRPLTEPSLQKTVLINNMLRRIQEELKQEG. 2 disordered regions span residues 77-119 and 181-222; these read KQEG…HPCD and PTST…SKLM. Residues 87–97 show a composition bias toward polar residues; the sequence is TPSSQPTTEPS. The segment covering 182–193 has biased composition (low complexity); sequence TSTSTEAATAAT. Over residues 210–221 the composition is skewed to basic and acidic residues; it reads GPQESRADDSKL. The tract at residues 235–311 is required for transactivation activity; that stretch reads TGFLTDLTLD…TELDHIMEVL (77 aa). The Nuclear export signal (NES) motif lies at 238–243; that stretch reads LTDLTL.

In terms of assembly, interacts with XPO1; which mediates nuclear export. Interacts with TFDP1; modulates transactivation activity of TFDP1/E2F complexes. Polyubiquitinated, which promotes proteasomal degradation. As to expression, expressed in adipose tissue.

The protein localises to the nucleus. It is found in the cytoplasm. Functionally, acts at E2F-responsive promoters as coregulator to integrate signals provided by PHD- and/or bromodomain-containing transcription factors. May act as coactivator as well as corepressor of E2F1-TFDP1 and E2F4-TFDP1 complexes on E2F consensus binding sites, which would activate or inhibit E2F-target genes expression. Modulates fat storage by down-regulating the expression of key genes involved in adipocyte lipolysis, thermogenesis and oxidative metabolism. The chain is SERTA domain-containing protein 2 (SERTAD2) from Homo sapiens (Human).